The following is a 447-amino-acid chain: Serine/threonine-protein phosphatase 2A 55 kDa regulatory subunit B alpha isoform (447 aa).

The residue at position 2 (Ala2) is an N-acetylalanine. WD repeat units lie at residues 11–80, 94–174, 175–218, 227–270, 288–325, 347–381, and 414–446; these read QWCF…FQSH, EKIN…IFAN, AHTY…VDIK, EVIT…KLFE, ISDVKFSHSGRYMMTRDYLSVKIWDLNMENRPVETYQV, ECCWNGSDSVVMTGSYNNFFRMFDRNTKRDITLEA, and DFNKKILHTAWHPKENIIAVATTNNLYIFQDKV.

It belongs to the phosphatase 2A regulatory subunit B family. In terms of assembly, PP2A consists of a common heterodimeric core enzyme, composed of a 36 kDa catalytic subunit (subunit C) and a 65 kDa constant regulatory subunit (PR65 or subunit A), that associates with a variety of regulatory subunits. Proteins that associate with the core dimer include three families of regulatory subunits B (the R2/B/PR55/B55, R3/B''/PR72/PR130/PR59 and R5/B'/B56 families), the 48 kDa variable regulatory subunit, viral proteins, and cell signaling molecules. Interacts with the PP2A C catalytic subunit PPP2CA. Interacts with the PP2A A subunit PPP2R1A. Interacts with TP53. Interacts with IER5. Interacts with MFHAS1; the interaction is direct. Interacts with PABIR1/FAM122A (via its N-terminus); the interaction is direct and inhibits PP2A activity. Interacts with ARPP19; the interaction is direct and inhibits PP2A activity. Interacts with CRTC3. Expressed in all tissues examined.

Substrate-recognition subunit of protein phosphatase 2A (PP2A) that plays a key role in cell cycle by controlling mitosis entry and exit. Involved in chromosome clustering during late mitosis by mediating dephosphorylation of MKI67. Essential for serine/threonine-protein phosphatase 2A-mediated dephosphorylation of WEE1, preventing its ubiquitin-mediated proteolysis, increasing WEE1 protein levels, and promoting the G2/M checkpoint. The polypeptide is Serine/threonine-protein phosphatase 2A 55 kDa regulatory subunit B alpha isoform (PPP2R2A) (Homo sapiens (Human)).